The chain runs to 403 residues: Protein IQ-DOMAIN 23 (403 aa).

The tract at residues 1–43 (MGFFGRLFGSKKKSDKAASSRDKRRWSFTTRSSNSSKRAPAVT) is disordered. The Nuclear localization signal motif lies at 10 to 17 (SKKKSDKA). Polar residues predominate over residues 27 to 43 (SFTTRSSNSSKRAPAVT). Positions 115 to 133 (QENIAAMKIQSAFRGYLAR) are calmodulin-binding. IQ domains follow at residues 116–144 (ENIA…ALVK) and 145–167 (LQAL…RMQT). Disordered regions lie at residues 176 to 208 (RARA…RSLH), 242 to 301 (ILEV…PTSR), and 381 to 403 (GGDS…SFLV). Over residues 257–267 (LRSERNNESPR) the composition is skewed to basic and acidic residues.

Belongs to the IQD family. In terms of assembly, binds to multiple calmodulin (CaM) in the presence of Ca(2+) and CaM-like proteins.

Its subcellular location is the nucleus. The protein localises to the nucleolus. The protein resides in the cytoplasm. It localises to the cytoskeleton. It is found in the cell membrane. Its function is as follows. May be involved in cooperative interactions with calmodulins or calmodulin-like proteins. Recruits calmodulin proteins to microtubules, thus being a potential scaffold in cellular signaling and trafficking. May associate with nucleic acids and regulate gene expression at the transcriptional or post-transcriptional level. This Arabidopsis thaliana (Mouse-ear cress) protein is Protein IQ-DOMAIN 23.